We begin with the raw amino-acid sequence, 432 residues long: Histidine--tRNA ligase (432 aa).

The interval 412–432 (TQVPLAAFPPEEGRPTYDDYA) is disordered. The span at 422–432 (EEGRPTYDDYA) shows a compositional bias: basic and acidic residues.

It belongs to the class-II aminoacyl-tRNA synthetase family.

It localises to the cytoplasm. It carries out the reaction tRNA(His) + L-histidine + ATP = L-histidyl-tRNA(His) + AMP + diphosphate + H(+). The chain is Histidine--tRNA ligase from Natronomonas pharaonis (strain ATCC 35678 / DSM 2160 / CIP 103997 / JCM 8858 / NBRC 14720 / NCIMB 2260 / Gabara) (Halobacterium pharaonis).